The following is a 147-amino-acid chain: Transcriptional repressor NrdR (147 aa).

Residues Cys-3 to Cys-34 fold into a zinc finger. Residues Pro-49–Ala-139 enclose the ATP-cone domain.

This sequence belongs to the NrdR family. The cofactor is Zn(2+).

In terms of biological role, negatively regulates transcription of bacterial ribonucleotide reductase nrd genes and operons by binding to NrdR-boxes. In Leptothrix cholodnii (strain ATCC 51168 / LMG 8142 / SP-6) (Leptothrix discophora (strain SP-6)), this protein is Transcriptional repressor NrdR.